Reading from the N-terminus, the 297-residue chain is Phosphoribosylaminoimidazole-succinocarboxamide synthase (297 aa).

This sequence belongs to the SAICAR synthetase family.

The enzyme catalyses 5-amino-1-(5-phospho-D-ribosyl)imidazole-4-carboxylate + L-aspartate + ATP = (2S)-2-[5-amino-1-(5-phospho-beta-D-ribosyl)imidazole-4-carboxamido]succinate + ADP + phosphate + 2 H(+). Its pathway is purine metabolism; IMP biosynthesis via de novo pathway; 5-amino-1-(5-phospho-D-ribosyl)imidazole-4-carboxamide from 5-amino-1-(5-phospho-D-ribosyl)imidazole-4-carboxylate: step 1/2. The polypeptide is Phosphoribosylaminoimidazole-succinocarboxamide synthase (Corynebacterium urealyticum (strain ATCC 43042 / DSM 7109)).